The following is a 285-amino-acid chain: Foldase protein PrsA 2 (285 aa).

Positions 1–20 (MRGKHIFIITALISILMLSA) are cleaved as a signal peptide. The N-palmitoyl cysteine moiety is linked to residue Cys21. A lipid anchor (S-diacylglycerol cysteine) is attached at Cys21. One can recognise a PpiC domain in the interval 134–224 (KPEIKASHIL…NGYHVIKLTD (91 aa)).

It belongs to the PrsA family.

The protein localises to the cell membrane. The catalysed reaction is [protein]-peptidylproline (omega=180) = [protein]-peptidylproline (omega=0). Functionally, plays a major role in protein secretion by helping the post-translocational extracellular folding of several secreted proteins. The sequence is that of Foldase protein PrsA 2 (prsA2) from Bacillus cereus (strain ATCC 14579 / DSM 31 / CCUG 7414 / JCM 2152 / NBRC 15305 / NCIMB 9373 / NCTC 2599 / NRRL B-3711).